We begin with the raw amino-acid sequence, 266 residues long: Chorismate mutase (266 aa).

A Chorismate mutase domain is found at 7 to 263; it reads MADSERALNL…EVEYLMQRLI (257 aa). L-tyrosine-binding residues include arginine 77, arginine 78, asparagine 144, glycine 146, serine 147, and threonine 150. L-tryptophan contacts are provided by asparagine 144, glycine 146, and serine 147.

As to quaternary structure, homodimer.

Its subcellular location is the cytoplasm. It catalyses the reaction chorismate = prephenate. It functions in the pathway metabolic intermediate biosynthesis; prephenate biosynthesis; prephenate from chorismate: step 1/1. With respect to regulation, each dimer has two allosteric binding sites that can bind the regulatory effectors tryptophan or tyrosine. Can bind either one tryptophan or one tyrosine, two tryptophan or two tyrosine or one tryptophan and one tyrosine, which differentially affect the catalytic activity. Activated by tryptophan and subject to feedback inhibition by tyrosine. In the presence of both tryptophan and tyrosine, the enzyme is in the activated state. In terms of biological role, catalyzes the Claisen rearrangement of chorismate to prephenate. Acts at the first branch point in the aromatic amino acid pathway where it steers biosynthesis towards phenylalanine and tyrosine, and away from tryptophan. The polypeptide is Chorismate mutase (Trichoderma parareesei (Filamentous fungus)).